The following is a 493-amino-acid chain: Alpha-amylase-related protein (493 aa).

The N-terminal stretch at 1 to 19 (MFKLALTLTLCLAGSLSLA) is a signal peptide. Glutamine 20 bears the Pyrrolidone carboxylic acid mark. An intrachain disulfide couples cysteine 47 to cysteine 103. Residues asparagine 117, glutamine 168, and aspartate 177 each coordinate Ca(2+). The cysteines at positions 156 and 170 are disulfide-linked. Arginine 205 is a chloride binding site. Aspartate 207 functions as the Nucleophile in the catalytic mechanism. Residue histidine 211 coordinates Ca(2+). The active-site Proton donor is glutamate 244. 2 residues coordinate chloride: asparagine 307 and arginine 342. Cystine bridges form between cysteine 375–cysteine 381, cysteine 417–cysteine 440, and cysteine 447–cysteine 459.

The protein belongs to the glycosyl hydrolase 13 family. As to quaternary structure, monomer. Ca(2+) is required as a cofactor. The cofactor is chloride.

The protein localises to the secreted. It carries out the reaction Endohydrolysis of (1-&gt;4)-alpha-D-glucosidic linkages in polysaccharides containing three or more (1-&gt;4)-alpha-linked D-glucose units.. The chain is Alpha-amylase-related protein (Amyrel) from Drosophila yakuba (Fruit fly).